The following is a 101-amino-acid chain: Carboxysome shell vertex protein CcmL (101 aa).

The BMV domain maps to 1 to 84; the sequence is MQIAKVRGTV…VDAAVVAIID (84 aa).

This sequence belongs to the CcmL/EutN family. CcmL subfamily. In terms of assembly, homopentamer. Interacts with full-length CcmM.

It localises to the carboxysome. Its function is as follows. Probably forms vertices in the carboxysome, a polyhedral inclusion where RuBisCO (ribulose bisphosphate carboxylase, rbcL-rbcS) is sequestered. Has been modeled to induce curvature upon insertion into an otherwise flat hexagonal molecular layer of CcmK subunits. The polypeptide is Carboxysome shell vertex protein CcmL (Nostoc sp. (strain PCC 7120 / SAG 25.82 / UTEX 2576)).